A 154-amino-acid chain; its full sequence is SKP1-like protein 13 (154 aa).

The segment at 96 to 154 is interaction with the F-box domain of F-box proteins; it reads MLAANYLNIKDLLDLGCQTVADMITGKKPDEIRALLGIENDFTPEEEEEIRKENQWAFE.

It belongs to the SKP1 family. As to quaternary structure, part of a SCF (SKP1-cullin-F-box) protein ligase complex. Interacts with ADO3/FKF1, EBF1, PP2A13, SKIP15, SKIP16, CPR1/CPR30, At1g55000, At3g61590, At1g67340, At1g78100, At3g04660, At4g38940, At4g39550 and At5g49610. As to expression, mostly expressed in inflorescences, and, to a lower extent, in seedlings and siliques. Also detected in cotyledons, leaves, pollen and seeds.

It is found in the nucleus. Its pathway is protein modification; protein ubiquitination. In terms of biological role, involved in ubiquitination and subsequent proteasomal degradation of target proteins. Together with CUL1, RBX1 and a F-box protein, it forms a SCF E3 ubiquitin ligase complex. The functional specificity of this complex depends on the type of F-box protein. In the SCF complex, it serves as an adapter that links the F-box protein to CUL1. This Arabidopsis thaliana (Mouse-ear cress) protein is SKP1-like protein 13 (ASK13).